A 368-amino-acid polypeptide reads, in one-letter code: Acetyl-coenzyme A carboxylase carboxyl transferase subunit alpha (368 aa).

The CoA carboxyltransferase C-terminal domain maps to 44–294 (EIDNKLQEIY…RKSIEKNLNE (251 aa)).

The protein belongs to the AccA family. Acetyl-CoA carboxylase is a heterohexamer composed of biotin carboxyl carrier protein (AccB), biotin carboxylase (AccC) and two subunits each of ACCase subunit alpha (AccA) and ACCase subunit beta (AccD).

It is found in the cytoplasm. It carries out the reaction N(6)-carboxybiotinyl-L-lysyl-[protein] + acetyl-CoA = N(6)-biotinyl-L-lysyl-[protein] + malonyl-CoA. The protein operates within lipid metabolism; malonyl-CoA biosynthesis; malonyl-CoA from acetyl-CoA: step 1/1. Functionally, component of the acetyl coenzyme A carboxylase (ACC) complex. First, biotin carboxylase catalyzes the carboxylation of biotin on its carrier protein (BCCP) and then the CO(2) group is transferred by the carboxyltransferase to acetyl-CoA to form malonyl-CoA. The polypeptide is Acetyl-coenzyme A carboxylase carboxyl transferase subunit alpha (Pelagibacter ubique (strain HTCC1062)).